The chain runs to 393 residues: Dual-specificity RNA methyltransferase RlmN (393 aa).

Glu-115 serves as the catalytic Proton acceptor. Residues 121-365 (EEDRGTLCIS…APIRKTRGDD (245 aa)) enclose the Radical SAM core domain. The cysteines at positions 128 and 370 are disulfide-linked. Cys-135, Cys-139, and Cys-142 together coordinate [4Fe-4S] cluster. S-adenosyl-L-methionine-binding positions include 194 to 195 (GE), Ser-226, 248 to 250 (SFH), and Asn-327. Cys-370 acts as the S-methylcysteine intermediate in catalysis.

This sequence belongs to the radical SAM superfamily. RlmN family. Requires [4Fe-4S] cluster as cofactor.

The protein resides in the cytoplasm. It catalyses the reaction adenosine(2503) in 23S rRNA + 2 reduced [2Fe-2S]-[ferredoxin] + 2 S-adenosyl-L-methionine = 2-methyladenosine(2503) in 23S rRNA + 5'-deoxyadenosine + L-methionine + 2 oxidized [2Fe-2S]-[ferredoxin] + S-adenosyl-L-homocysteine. The enzyme catalyses adenosine(37) in tRNA + 2 reduced [2Fe-2S]-[ferredoxin] + 2 S-adenosyl-L-methionine = 2-methyladenosine(37) in tRNA + 5'-deoxyadenosine + L-methionine + 2 oxidized [2Fe-2S]-[ferredoxin] + S-adenosyl-L-homocysteine. Its function is as follows. Specifically methylates position 2 of adenine 2503 in 23S rRNA and position 2 of adenine 37 in tRNAs. m2A2503 modification seems to play a crucial role in the proofreading step occurring at the peptidyl transferase center and thus would serve to optimize ribosomal fidelity. This chain is Dual-specificity RNA methyltransferase RlmN, found in Ruegeria pomeroyi (strain ATCC 700808 / DSM 15171 / DSS-3) (Silicibacter pomeroyi).